The primary structure comprises 64 residues: UPF0434 protein TERTU_2813 (64 aa).

Belongs to the UPF0434 family.

In Teredinibacter turnerae (strain ATCC 39867 / T7901), this protein is UPF0434 protein TERTU_2813.